A 129-amino-acid polypeptide reads, in one-letter code: Fluoride-specific ion channel FluC 2 (129 aa).

4 helical membrane passes run 3-23, 32-52, 59-79, and 90-110; these read FLYVGVFGALGGMCRYAMNLW, ATLAVNLIGCFLLAFLMRFLA, LVLLNGIGTGFIGAFTTFSAF, and GAWLFAVSYVLASFIGGLIMV. The Na(+) site is built by Gly-71 and Thr-74.

Belongs to the fluoride channel Fluc/FEX (TC 1.A.43) family.

It is found in the cell membrane. It carries out the reaction fluoride(in) = fluoride(out). With respect to regulation, na(+) is not transported, but it plays an essential structural role and its presence is essential for fluoride channel function. Its function is as follows. Fluoride-specific ion channel. Important for reducing fluoride concentration in the cell, thus reducing its toxicity. The polypeptide is Fluoride-specific ion channel FluC 2 (Listeria monocytogenes serovar 1/2a (strain ATCC BAA-679 / EGD-e)).